An 88-amino-acid polypeptide reads, in one-letter code: Apolipoprotein C-I (88 aa).

The signal sequence occupies residues 1 to 26 (MRLFIALPVLIVVVAMALEGPAPAQA).

The protein belongs to the apolipoprotein C1 family.

It localises to the secreted. In terms of biological role, inhibitor of lipoprotein binding to the low density lipoprotein (LDL) receptor, LDL receptor-related protein, and very low density lipoprotein (VLDL) receptor. Associates with high density lipoproteins (HDL) and the triacylglycerol-rich lipoproteins in the plasma and makes up about 10% of the protein of the VLDL and 2% of that of HDL. Appears to interfere directly with fatty acid uptake and is also the major plasma inhibitor of cholesteryl ester transfer protein (CETP). Modulates the interaction of APOE with beta-migrating VLDL and inhibits binding of beta-VLDL to the LDL receptor-related protein. Binds free fatty acids and reduces their intracellular esterification. The sequence is that of Apolipoprotein C-I (Apoc1) from Grammomys surdaster (African woodland thicket rat).